The primary structure comprises 152 residues: Succinate dehydrogenase [ubiquinone] cytochrome b small subunit, mitochondrial (152 aa).

Residues M1–S21 constitute a mitochondrion transit peptide. Over L22–S56 the chain is Mitochondrial matrix. The chain crosses the membrane as a helical span at residues M57–L78. Topologically, residues Y79–A83 are mitochondrial intermembrane. A helical transmembrane segment spans residues M84–V104. A heme b-binding site is contributed by H95. Topologically, residues T105–K113 are mitochondrial matrix. Residue Y107 participates in a ubiquinone binding. A helical membrane pass occupies residues I114–F135. The Mitochondrial intermembrane portion of the chain corresponds to N136–L152.

Belongs to the CybS family. As to quaternary structure, component of complex II composed of four subunits: the flavoprotein (FP) SDHA, iron-sulfur protein (IP) SDHB, and a cytochrome b560 composed of SDHC and SDHD.

Its subcellular location is the mitochondrion inner membrane. Its pathway is carbohydrate metabolism; tricarboxylic acid cycle. In terms of biological role, membrane-anchoring subunit of succinate dehydrogenase (SDH) that is involved in complex II of the mitochondrial electron transport chain and is responsible for transferring electrons from succinate to ubiquinone (coenzyme Q). SDH also oxidizes malate to the non-canonical enol form of oxaloacetate, enol-oxaloacetate. Enol-oxaloacetate, which is a potent inhibitor of the succinate dehydrogenase activity, is further isomerized into keto-oxaloacetate. The polypeptide is Succinate dehydrogenase [ubiquinone] cytochrome b small subunit, mitochondrial (sdhd) (Xenopus tropicalis (Western clawed frog)).